The primary structure comprises 169 residues: 6,7-dimethyl-8-ribityllumazine synthase (169 aa).

Residues W27, 61–63 (SYE), and 90–92 (VLI) contribute to the 5-amino-6-(D-ribitylamino)uracil site. 95 to 96 (ST) provides a ligand contact to (2S)-2-hydroxy-3-oxobutyl phosphate. H98 functions as the Proton donor in the catalytic mechanism. Residue F123 coordinates 5-amino-6-(D-ribitylamino)uracil. R137 is a (2S)-2-hydroxy-3-oxobutyl phosphate binding site.

This sequence belongs to the DMRL synthase family. In terms of assembly, homopentamer.

Its subcellular location is the mitochondrion intermembrane space. It carries out the reaction (2S)-2-hydroxy-3-oxobutyl phosphate + 5-amino-6-(D-ribitylamino)uracil = 6,7-dimethyl-8-(1-D-ribityl)lumazine + phosphate + 2 H2O + H(+). It participates in cofactor biosynthesis; riboflavin biosynthesis; riboflavin from 2-hydroxy-3-oxobutyl phosphate and 5-amino-6-(D-ribitylamino)uracil: step 1/2. Catalyzes the formation of 6,7-dimethyl-8-ribityllumazine by condensation of 5-amino-6-(D-ribitylamino)uracil with 3,4-dihydroxy-2-butanone 4-phosphate. This is the penultimate step in the biosynthesis of riboflavin. This Saccharomyces cerevisiae (strain ATCC 204508 / S288c) (Baker's yeast) protein is 6,7-dimethyl-8-ribityllumazine synthase (RIB4).